The chain runs to 99 residues: Malonate decarboxylase acyl carrier protein (99 aa).

An O-(phosphoribosyl dephospho-coenzyme A)serine modification is found at Ser25.

It belongs to the MdcC family. In terms of processing, covalently binds the prosthetic group of malonate decarboxylase.

The protein localises to the cytoplasm. Its function is as follows. Subunit of malonate decarboxylase, it is an acyl carrier protein to which acetyl and malonyl thioester residues are bound via a 2'-(5''-phosphoribosyl)-3'-dephospho-CoA prosthetic group and turn over during the catalytic mechanism. The chain is Malonate decarboxylase acyl carrier protein from Pseudomonas paraeruginosa (strain DSM 24068 / PA7) (Pseudomonas aeruginosa (strain PA7)).